Here is a 94-residue protein sequence, read N- to C-terminus: C-C motif chemokine 17 (94 aa).

The first 23 residues, 1-23 (MAPLKMLALVTLLLGASLQHIHA), serve as a signal peptide directing secretion. 2 cysteine pairs are disulfide-bonded: cysteine 33–cysteine 57 and cysteine 34–cysteine 73.

It belongs to the intercrine beta (chemokine CC) family. In terms of tissue distribution, constitutively expressed in thymus. Detected at lower levels in the lung, colon and small intestine. Expressed in stimulated peripheral blood mononuclear cells, but not in resting cells.

The protein localises to the secreted. Its function is as follows. Chemokine, which displays chemotactic activity for T lymphocytes, preferentially Th2 cells, but not monocytes or granulocytes. Therefore plays an important role in a wide range of inflammatory and immunological processes. Acts by binding to CCR4 at T-cell surface. Mediates GM-CSF/CSF2-driven pain and inflammation. In the brain, required to maintain the typical, highly branched morphology of hippocampal microglia under homeostatic conditions. May be important for the appropriate adaptation of microglial morphology and synaptic plasticity to acute lipopolysaccharide (LPS)-induced neuroinflammation. Plays a role in wound healing, mainly by inducing fibroblast migration into the wound. This Homo sapiens (Human) protein is C-C motif chemokine 17 (CCL17).